A 36-amino-acid chain; its full sequence is Peruvianin-1 (36 aa).

It belongs to the germin family. In terms of assembly, homohexamer, possibly consisting of a trimer of dimers. Glycosylated.

Its activity is regulated as follows. Inhibited by iodoacetamide and trans-epoxysuccinyl-L-leucylamido(4-guanidino)butane (E-64) but not by phenylmethylsulfonyl fluoride (PMSF), pepstatin-A, ethylenediamine tetra acetic acid (EDTA) or ethylene glycol tetraacetic acid (EGTA). Its function is as follows. Cysteine protease able to degrade azocasein and benzoyl-arginine-beta-naphtylamide (BANA) in vitro. This Thevetia peruviana (Yellow oleander) protein is Peruvianin-1.